The chain runs to 592 residues: V-type ATP synthase alpha chain 1 (592 aa).

ATP is bound at residue 233 to 240 (GPFGSGKT).

The protein belongs to the ATPase alpha/beta chains family.

The catalysed reaction is ATP + H2O + 4 H(+)(in) = ADP + phosphate + 5 H(+)(out). Its function is as follows. Produces ATP from ADP in the presence of a proton gradient across the membrane. The V-type alpha chain is a catalytic subunit. The chain is V-type ATP synthase alpha chain 1 from Clostridium tetani (strain Massachusetts / E88).